The following is a 571-amino-acid chain: 2-succinyl-5-enolpyruvyl-6-hydroxy-3-cyclohexene-1-carboxylate synthase (571 aa).

This sequence belongs to the TPP enzyme family. MenD subfamily. Homodimer. Mg(2+) is required as a cofactor. Requires Mn(2+) as cofactor. It depends on thiamine diphosphate as a cofactor.

The catalysed reaction is isochorismate + 2-oxoglutarate + H(+) = 5-enolpyruvoyl-6-hydroxy-2-succinyl-cyclohex-3-ene-1-carboxylate + CO2. Its pathway is quinol/quinone metabolism; 1,4-dihydroxy-2-naphthoate biosynthesis; 1,4-dihydroxy-2-naphthoate from chorismate: step 2/7. It functions in the pathway quinol/quinone metabolism; menaquinone biosynthesis. Functionally, catalyzes the thiamine diphosphate-dependent decarboxylation of 2-oxoglutarate and the subsequent addition of the resulting succinic semialdehyde-thiamine pyrophosphate anion to isochorismate to yield 2-succinyl-5-enolpyruvyl-6-hydroxy-3-cyclohexene-1-carboxylate (SEPHCHC). This Lysinibacillus sphaericus (strain C3-41) protein is 2-succinyl-5-enolpyruvyl-6-hydroxy-3-cyclohexene-1-carboxylate synthase.